The primary structure comprises 461 residues: UPF0053 protein YhdT (461 aa).

Residues 1-202 form the CNNM transmembrane domain; sequence MDDIDSLILI…LKNGEINPSE (202 aa). Transmembrane regions (helical) follow at residues 8-28, 103-123, and 137-157; these read ILIG…FAIV, VSFA…GELA, and LLIA…IWIL. CBS domains follow at residues 221–280 and 290–347; these read MIPR…MTEE and YVRP…IRDE.

It belongs to the UPF0053 family.

It is found in the cell membrane. In Bacillus subtilis (strain 168), this protein is UPF0053 protein YhdT (yhdT).